A 525-amino-acid polypeptide reads, in one-letter code: Chromosomal replication initiator protein DnaA (525 aa).

The interval 1 to 71 is domain I, interacts with DnaA modulators; that stretch reads MNDFWQHCSA…ADLAREFWNT (71 aa). The domain II stretch occupies residues 71–188; sequence TPIEVQFVLD…AEADSMYERS (118 aa). The disordered stretch occupies residues 160-181; that stretch reads AAAGRRTWRPGPGAAPANGAEA. The segment covering 169 to 181 has biased composition (low complexity); sequence PGPGAAPANGAEA. A domain III, AAA+ region region spans residues 189-405; that stretch reads KLNPVLTFDN…GALRKILAYS (217 aa). ATP contacts are provided by G233, G235, K236, and T237. Residues 406 to 525 are domain IV, binds dsDNA; it reads KFHGREISIE…LHVLEQTLKG (120 aa).

This sequence belongs to the DnaA family. Oligomerizes as a right-handed, spiral filament on DNA at oriC.

It is found in the cytoplasm. Functionally, plays an essential role in the initiation and regulation of chromosomal replication. ATP-DnaA binds to the origin of replication (oriC) to initiate formation of the DNA replication initiation complex once per cell cycle. Binds the DnaA box (a 9 base pair repeat at the origin) and separates the double-stranded (ds)DNA. Forms a right-handed helical filament on oriC DNA; dsDNA binds to the exterior of the filament while single-stranded (ss)DNA is stabiized in the filament's interior. The ATP-DnaA-oriC complex binds and stabilizes one strand of the AT-rich DNA unwinding element (DUE), permitting loading of DNA polymerase. After initiation quickly degrades to an ADP-DnaA complex that is not apt for DNA replication. Binds acidic phospholipids. This chain is Chromosomal replication initiator protein DnaA, found in Burkholderia vietnamiensis (strain G4 / LMG 22486) (Burkholderia cepacia (strain R1808)).